Here is a 67-residue protein sequence, read N- to C-terminus: UPF0337 protein msl9551 (67 aa).

It belongs to the UPF0337 (CsbD) family.

The chain is UPF0337 protein msl9551 from Mesorhizobium japonicum (strain LMG 29417 / CECT 9101 / MAFF 303099) (Mesorhizobium loti (strain MAFF 303099)).